A 247-amino-acid polypeptide reads, in one-letter code: Ribosomal RNA small subunit methyltransferase J (247 aa).

S-adenosyl-L-methionine is bound by residues 106–107 (RD), 122–123 (ER), and Asp-168.

The protein belongs to the methyltransferase superfamily. RsmJ family.

The protein localises to the cytoplasm. It carries out the reaction guanosine(1516) in 16S rRNA + S-adenosyl-L-methionine = N(2)-methylguanosine(1516) in 16S rRNA + S-adenosyl-L-homocysteine + H(+). In terms of biological role, specifically methylates the guanosine in position 1516 of 16S rRNA. The polypeptide is Ribosomal RNA small subunit methyltransferase J (Alcanivorax borkumensis (strain ATCC 700651 / DSM 11573 / NCIMB 13689 / SK2)).